A 109-amino-acid chain; its full sequence is UPF0449 protein C19orf25 homolog (109 aa).

Tyr63 is subject to Phosphotyrosine.

Belongs to the UPF0449 family.

This chain is UPF0449 protein C19orf25 homolog, found in Rattus norvegicus (Rat).